The chain runs to 554 residues: NADH-quinone oxidoreductase subunit N 3 (554 aa).

14 helical membrane-spanning segments follow: residues 35–55 (LMPV…EAFV), 65–85 (LFLT…LAAG), 105–125 (PTLF…FTFA), 161–181 (GFTT…LLVF), 187–207 (LLTL…LCAV), 222–242 (YFLL…LLYG), 275–295 (ALLL…VGAV), 322–342 (VAAF…LAWD), 345–365 (PVMW…AITQ), 371–391 (LLAY…IAAS), 398–418 (VLFY…VVTL), 442–462 (VAAV…TSGF), 476–496 (GAGA…FFYI), and 525–545 (IAVG…FLDL).

Belongs to the complex I subunit 2 family. NDH-1 is composed of 14 different subunits. Subunits NuoA, H, J, K, L, M, N constitute the membrane sector of the complex.

The protein localises to the cell membrane. The catalysed reaction is a quinone + NADH + 5 H(+)(in) = a quinol + NAD(+) + 4 H(+)(out). NDH-1 shuttles electrons from NADH, via FMN and iron-sulfur (Fe-S) centers, to quinones in the respiratory chain. The immediate electron acceptor for the enzyme in this species is believed to be a menaquinone. Couples the redox reaction to proton translocation (for every two electrons transferred, four hydrogen ions are translocated across the cytoplasmic membrane), and thus conserves the redox energy in a proton gradient. The polypeptide is NADH-quinone oxidoreductase subunit N 3 (Streptomyces griseus subsp. griseus (strain JCM 4626 / CBS 651.72 / NBRC 13350 / KCC S-0626 / ISP 5235)).